Here is an 862-residue protein sequence, read N- to C-terminus: Valine--tRNA ligase (862 aa).

The 'HIGH' region signature appears at 43–53 (PTVSGALHVGH). The interval 459-494 (ERPILPDDAALPVDPSSDTPTGYHDSQRHQPGGFMA) is disordered. The short motif at 574–578 (KMSKS) is the 'KMSKS' region element. K577 lines the ATP pocket.

Belongs to the class-I aminoacyl-tRNA synthetase family. ValS type 2 subfamily. In terms of assembly, monomer.

The protein resides in the cytoplasm. It carries out the reaction tRNA(Val) + L-valine + ATP = L-valyl-tRNA(Val) + AMP + diphosphate. Catalyzes the attachment of valine to tRNA(Val). As ValRS can inadvertently accommodate and process structurally similar amino acids such as threonine, to avoid such errors, it has a 'posttransfer' editing activity that hydrolyzes mischarged Thr-tRNA(Val) in a tRNA-dependent manner. This Salinispora arenicola (strain CNS-205) protein is Valine--tRNA ligase.